Consider the following 250-residue polypeptide: Ribosomal RNA small subunit methyltransferase J (250 aa).

S-adenosyl-L-methionine is bound by residues 101–102, 117–118, 153–154, and Asp171; these read RD, ER, and SS.

This sequence belongs to the methyltransferase superfamily. RsmJ family.

It localises to the cytoplasm. The enzyme catalyses guanosine(1516) in 16S rRNA + S-adenosyl-L-methionine = N(2)-methylguanosine(1516) in 16S rRNA + S-adenosyl-L-homocysteine + H(+). Specifically methylates the guanosine in position 1516 of 16S rRNA. This is Ribosomal RNA small subunit methyltransferase J from Shigella flexneri serotype 5b (strain 8401).